The chain runs to 309 residues: MTDSLTHTSPFLVAALYHFVSVPRFENLQALLQTLCEQSGVKGTLLLAHEGINGTIAGPDAGIAAVLSFLRAQPEFSGLEHKESRASKMPFLRMKVKLKKEIVTMGVEDIDPNKVVGTYVAPQEWNALISDPDTIVIDTRNDYETAIGTFRGALDPKTKTFREFPDWVRSNSGLHNKPKIAMYCTGGIRCEKATAFMKAEGFDEVYHLKGGILKYLEEVPQEESLWDGACFVFDERVSVEHGLKEGEHRLCHACRNPITAEEITSPLYEEGVSCSHCYDTRTEEDRLRYRQRQHQIALARKRGQRHIGS.

Residues serine 130 to serine 224 form the Rhodanese domain. Cysteine 184 (cysteine persulfide intermediate) is an active-site residue.

This sequence belongs to the TrhO family.

It carries out the reaction uridine(34) in tRNA + AH2 + O2 = 5-hydroxyuridine(34) in tRNA + A + H2O. Functionally, catalyzes oxygen-dependent 5-hydroxyuridine (ho5U) modification at position 34 in tRNAs. The chain is tRNA uridine(34) hydroxylase from Rhizobium leguminosarum bv. trifolii (strain WSM2304).